Reading from the N-terminus, the 130-residue chain is Small ribosomal subunit protein uS9 (130 aa).

This sequence belongs to the universal ribosomal protein uS9 family. Part of the 30S ribosomal subunit.

This Bacillus subtilis (strain 168) protein is Small ribosomal subunit protein uS9 (rpsI).